Reading from the N-terminus, the 418-residue chain is Nickel and cobalt resistance protein CnrC (418 aa).

Residues 1–29 (MKQVISSFLCRPRFVGSAIWLLPVALSHA) form the signal peptide.

It belongs to the outer membrane factor (OMF) (TC 1.B.17) family.

In terms of biological role, the products of the genes cnrA, cnrB, and cnrC are likely to form a membrane-bound protein complex catalyzing an energy-dependent efflux of Ni(2+) and Co(2+). The mechanism of action of the CnrCBA complex may be that of a proton/cation antiporter. The polypeptide is Nickel and cobalt resistance protein CnrC (cnrC) (Cupriavidus metallidurans (strain ATCC 43123 / DSM 2839 / NBRC 102507 / CH34) (Ralstonia metallidurans)).